Reading from the N-terminus, the 339-residue chain is N-acetyl-gamma-glutamyl-phosphate reductase (339 aa).

Residue cysteine 145 is part of the active site.

This sequence belongs to the NAGSA dehydrogenase family. Type 1 subfamily.

It localises to the cytoplasm. The catalysed reaction is N-acetyl-L-glutamate 5-semialdehyde + phosphate + NADP(+) = N-acetyl-L-glutamyl 5-phosphate + NADPH + H(+). Its pathway is amino-acid biosynthesis; L-arginine biosynthesis; N(2)-acetyl-L-ornithine from L-glutamate: step 3/4. Catalyzes the NADPH-dependent reduction of N-acetyl-5-glutamyl phosphate to yield N-acetyl-L-glutamate 5-semialdehyde. The chain is N-acetyl-gamma-glutamyl-phosphate reductase from Thermotoga maritima (strain ATCC 43589 / DSM 3109 / JCM 10099 / NBRC 100826 / MSB8).